We begin with the raw amino-acid sequence, 1750 residues long: Brefeldin A-inhibited guanine nucleotide-exchange protein 3 (1750 aa).

Residue Ala-2 is modified to N-acetylalanine. Disordered regions lie at residues 44–65 (LRSPENSSPVADSESGSSIPGP) and 565–596 (EEGSHPVENGKGDGGHGGFERSDSQSELSSGN). Polar residues predominate over residues 47–61 (PENSSPVADSESGSS). The span at 565 to 588 (EEGSHPVENGKGDGGHGGFERSDS) shows a compositional bias: basic and acidic residues. Ser-586 bears the Phosphoserine mark. The 188-residue stretch at 601-788 (AIEQRRAYKL…RALYERISRN (188 aa)) folds into the SEC7 domain. The active site involves Glu-703. Ser-1307 is subject to Phosphoserine.

In terms of assembly, homodimer.

It localises to the cytoplasm. The protein resides in the cytosol. The protein localises to the membrane. With respect to regulation, inhibited by brefeldin A. In terms of biological role, activates the ARF proteins by exchanging bound GDP for free GTP. Plays a role in vesicular protein sorting. Involved both in the nuclear division phase and in the nuclear fusion phase. This is Brefeldin A-inhibited guanine nucleotide-exchange protein 3 (BIG3) from Arabidopsis thaliana (Mouse-ear cress).